A 208-amino-acid polypeptide reads, in one-letter code: V-type ATP synthase subunit D (208 aa).

It belongs to the V-ATPase D subunit family.

Its function is as follows. Produces ATP from ADP in the presence of a proton gradient across the membrane. This Streptococcus pyogenes serotype M49 (strain NZ131) protein is V-type ATP synthase subunit D.